Reading from the N-terminus, the 424-residue chain is Putative histone deacetylase complex subunit cti6 (424 aa).

Disordered regions lie at residues 1–49, 117–155, 170–341, and 381–405; these read MPSN…GEVT, SKYLGNGKPIEASQTEESSSTPPSPATKKSSKQRLTMNS, KEKS…PDGT, and AQSAGNQSSTKSSKEGPEEEKETLR. The segment at 48 to 103 adopts a PHD-type zinc-finger fold; sequence VTRCVCGIVESDDEASDGGLYIQCDQCSVWQHGNCVGFADESEVPEVYYCEICHPE. Low complexity predominate over residues 127 to 137; the sequence is EASQTEESSST. Ser187 is modified (phosphoserine). The segment covering 241-256 has biased composition (acidic residues); sequence DAPEEETVDTVEEIAD. Positions 257–266 are enriched in basic and acidic residues; sequence EEKHSVKEES. Positions 272 to 287 are enriched in low complexity; the sequence is QSSQQSTITSISTTTR. Basic and acidic residues predominate over residues 294–303; that stretch reads REAAAEDKAD. Basic residues predominate over residues 313-324; sequence SKTRKVGGRRGK. Residues 392–405 show a composition bias toward basic and acidic residues; it reads SSKEGPEEEKETLR.

It localises to the cytoplasm. The protein localises to the nucleus. In terms of biological role, could be a component of the RPD3C(L) histone deacetylase complex (HDAC). This Schizosaccharomyces pombe (strain 972 / ATCC 24843) (Fission yeast) protein is Putative histone deacetylase complex subunit cti6 (cti6).